Here is an 827-residue protein sequence, read N- to C-terminus: Leucine--tRNA ligase (827 aa).

The short motif at 42–52 (PYPSGKLHMGH) is the 'HIGH' region element. The short motif at 581–585 (KMSKS) is the 'KMSKS' region element. An ATP-binding site is contributed by Lys584.

It belongs to the class-I aminoacyl-tRNA synthetase family.

The protein localises to the cytoplasm. It catalyses the reaction tRNA(Leu) + L-leucine + ATP = L-leucyl-tRNA(Leu) + AMP + diphosphate. This chain is Leucine--tRNA ligase, found in Desulforamulus reducens (strain ATCC BAA-1160 / DSM 100696 / MI-1) (Desulfotomaculum reducens).